A 541-amino-acid polypeptide reads, in one-letter code: Neutral amino acid transporter B(0) (541 aa).

M1 is modified (N-acetylmethionine). The Cytoplasmic portion of the chain corresponds to 1 to 51 (MVADPPRDSKGLAAAEPTANGGLALASIEDQGAAAGGYCGSRDQVRRCLRA). The helical transmembrane segment at 52 to 81 (NLLVLLTVVAVVAGVALGLGVSGAGGALAL) threads the bilayer. Residues 82-94 (GPERLSAFVFPGE) lie on the Extracellular side of the membrane. The helical transmembrane segment at 95-116 (LLLRLLRMIILPLVVCSLIGGA) threads the bilayer. Over 117–130 (ASLDPGALGRLGAW) the chain is Cytoplasmic. A helical transmembrane segment spans residues 131 to 153 (ALLFFLVTTLLASALGVGLALAL). Topologically, residues 154–224 (QPGAASAAIN…GTRVKVPVGQ (71 aa)) are extracellular. Residues N163 and N212 are each glycosylated (N-linked (GlcNAc...) asparagine). Residues 225–248 (EVEGMNILGLVVFAIVFGVALRKL) form a helical membrane-spanning segment. The Cytoplasmic segment spans residues 249 to 257 (GPEGELLIR). The chain crosses the membrane as a helical span at residues 258–285 (FFNSFNEATMVLVSWIMWYAPVGIMFLV). At 286 to 306 (AGKIVEMEDVGLLFARLGKYI) the chain is on the extracellular side. A helical transmembrane segment spans residues 307-328 (LCCLLGHAIHGLLVLPLIYFLF). Over 329 to 333 (TRKNP) the chain is Cytoplasmic. Positions 334–364 (YRFLWGIVTPLATAFGTSSSSATLPLMMKCV) form an intramembrane region, discontinuously helical. The Cytoplasmic segment spans residues 365–373 (EENNGVAKH). The chain crosses the membrane as a helical span at residues 374 to 400 (ISRFILPIGATVNMDGAALFQCVAAVF). The Na(+) site is built by G382, T384, and N386. The Extracellular segment spans residues 401-413 (IAQLSQQSLDFVK). The discontinuously helical intramembrane region spans 414 to 447 (IITILVTATASSVGAAGIPAGGVLTLAIILEAVN). Over 448–460 (LPVDHISLILAVD) the chain is Extracellular. A helical transmembrane segment spans residues 461 to 482 (WLVDRSCTVLNVEGDALGAGLL). Positions 471 and 475 each coordinate Na(+). At 483–541 (QNYVDRTESRSTEPELIQVKSELPLDPLPVPTEEGNPLLKHYRGPAGDATVASEKESVM) the chain is on the cytoplasmic side. S493 bears the Phosphoserine mark. Phosphothreonine is present on T494. S503, S535, and S539 each carry phosphoserine. Residues 511–541 (PVPTEEGNPLLKHYRGPAGDATVASEKESVM) are disordered.

It belongs to the dicarboxylate/amino acid:cation symporter (DAACS) (TC 2.A.23) family. SLC1A5 subfamily. Homotrimer. Interacts with ERVH48-1/suppressyn; may negatively regulate syncytialization. In terms of tissue distribution, placenta, lung, skeletal muscle, kidney, pancreas, and intestine. Expressed in CD34-positive hematopoietic progenitors (at protein level).

The protein localises to the cell membrane. Its subcellular location is the melanosome. It catalyses the reaction L-glutamine(out) + L-serine(in) + Na(+)(out) = L-glutamine(in) + L-serine(out) + Na(+)(in). The catalysed reaction is L-glutamine(in) + L-serine(out) + Na(+)(out) = L-glutamine(out) + L-serine(in) + Na(+)(in). It carries out the reaction L-threonine(in) + L-glutamine(out) + Na(+)(out) = L-threonine(out) + L-glutamine(in) + Na(+)(in). The enzyme catalyses L-threonine(out) + L-glutamine(in) + Na(+)(out) = L-threonine(in) + L-glutamine(out) + Na(+)(in). It catalyses the reaction L-asparagine(in) + L-glutamine(out) + Na(+)(out) = L-asparagine(out) + L-glutamine(in) + Na(+)(in). The catalysed reaction is L-asparagine(out) + L-glutamine(in) + Na(+)(out) = L-asparagine(in) + L-glutamine(out) + Na(+)(in). It carries out the reaction L-glutamine(in) + L-alanine(out) + Na(+)(out) = L-glutamine(out) + L-alanine(in) + Na(+)(in). The enzyme catalyses L-valine(out) + L-glutamine(in) + Na(+)(out) = L-valine(in) + L-glutamine(out) + Na(+)(in). It catalyses the reaction L-glutamine(in) + L-methionine(out) + Na(+)(out) = L-glutamine(out) + L-methionine(in) + Na(+)(in). The catalysed reaction is L-glutamine(in) + L-glutamate(out) + Na(+)(out) + H(+)(out) = L-glutamine(out) + L-glutamate(in) + Na(+)(in) + H(+)(in). It carries out the reaction D-serine(in) + L-glutamine(out) + Na(+)(out) = D-serine(out) + L-glutamine(in) + Na(+)(in). The enzyme catalyses D-serine(in) + L-alanine(out) + Na(+)(out) = D-serine(out) + L-alanine(in) + Na(+)(in). It catalyses the reaction nitrate(in) = nitrate(out). The catalysed reaction is iodide(out) = iodide(in). It carries out the reaction thiocyanate(in) = thiocyanate(out). Regulated by L-cysteine, which can either inhibit substrate influx or trigger substrate efflux without being transported itself. Functionally, sodium-coupled antiporter of neutral amino acids. In a tri-substrate transport cycle, exchanges neutral amino acids between the extracellular and intracellular compartments, coupled to the inward cotransport of at least one sodium ion. The preferred substrate is the essential amino acid L-glutamine, a precursor for biosynthesis of proteins, nucleotides and amine sugars as well as an alternative fuel for mitochondrial oxidative phosphorylation. Exchanges L-glutamine with other neutral amino acids such as L-serine, L-threonine and L-asparagine in a bidirectional way. Provides L-glutamine to proliferating stem and activated cells driving the metabolic switch toward cell differentiation. The transport cycle is usually pH-independent, with the exception of L-glutamate. Transports extracellular L-glutamate coupled to the cotransport of one proton and one sodium ion in exchange for intracellular L-glutamine counter-ion. May provide for L-glutamate uptake in glial cells regulating glutamine/glutamate cycle in the nervous system. Can transport D-amino acids. Mediates D-serine release from the retinal glia potentially affecting NMDA receptor function in retinal neurons. Displays sodium- and amino acid-dependent but uncoupled channel-like anion conductance with a preference SCN(-) &gt;&gt; NO3(-) &gt; I(-) &gt; Cl(-). Through binding of the fusogenic protein syncytin-1/ERVW-1 may mediate trophoblasts syncytialization, the spontaneous fusion of their plasma membranes, an essential process in placental development. Its function is as follows. (Microbial infection) Acts as a cell surface receptor for Feline endogenous virus RD114. (Microbial infection) Acts as a cell surface receptor for Baboon M7 endogenous virus. In terms of biological role, (Microbial infection) Acts as a cell surface receptor for type D simian retroviruses. This is Neutral amino acid transporter B(0) from Homo sapiens (Human).